A 368-amino-acid polypeptide reads, in one-letter code: UDP-N-acetylglucosamine--N-acetylmuramyl-(pentapeptide) pyrophosphoryl-undecaprenol N-acetylglucosamine transferase (368 aa).

UDP-N-acetyl-alpha-D-glucosamine is bound by residues 10 to 12 (TGG), Asn124, Ser196, Ile251, and Gln296.

It belongs to the glycosyltransferase 28 family. MurG subfamily.

It localises to the cell membrane. The enzyme catalyses Mur2Ac(oyl-L-Ala-gamma-D-Glu-L-Lys-D-Ala-D-Ala)-di-trans,octa-cis-undecaprenyl diphosphate + UDP-N-acetyl-alpha-D-glucosamine = beta-D-GlcNAc-(1-&gt;4)-Mur2Ac(oyl-L-Ala-gamma-D-Glu-L-Lys-D-Ala-D-Ala)-di-trans,octa-cis-undecaprenyl diphosphate + UDP + H(+). It participates in cell wall biogenesis; peptidoglycan biosynthesis. In terms of biological role, cell wall formation. Catalyzes the transfer of a GlcNAc subunit on undecaprenyl-pyrophosphoryl-MurNAc-pentapeptide (lipid intermediate I) to form undecaprenyl-pyrophosphoryl-MurNAc-(pentapeptide)GlcNAc (lipid intermediate II). This is UDP-N-acetylglucosamine--N-acetylmuramyl-(pentapeptide) pyrophosphoryl-undecaprenol N-acetylglucosamine transferase from Limosilactobacillus fermentum (strain NBRC 3956 / LMG 18251) (Lactobacillus fermentum).